Consider the following 92-residue polypeptide: Small ribosomal subunit protein uS19c (92 aa).

Belongs to the universal ribosomal protein uS19 family.

Its subcellular location is the plastid. The protein resides in the chloroplast. In terms of biological role, protein S19 forms a complex with S13 that binds strongly to the 16S ribosomal RNA. This is Small ribosomal subunit protein uS19c from Thalassiosira pseudonana (Marine diatom).